The following is a 407-amino-acid chain: Arginine biosynthesis bifunctional protein ArgJ (407 aa).

Residues Thr157, Lys183, Thr194, Glu280, Asn402, and Thr407 each contribute to the substrate site. Thr194 acts as the Nucleophile in catalysis.

Belongs to the ArgJ family. As to quaternary structure, heterotetramer of two alpha and two beta chains.

It is found in the cytoplasm. The enzyme catalyses N(2)-acetyl-L-ornithine + L-glutamate = N-acetyl-L-glutamate + L-ornithine. It catalyses the reaction L-glutamate + acetyl-CoA = N-acetyl-L-glutamate + CoA + H(+). Its pathway is amino-acid biosynthesis; L-arginine biosynthesis; L-ornithine and N-acetyl-L-glutamate from L-glutamate and N(2)-acetyl-L-ornithine (cyclic): step 1/1. It functions in the pathway amino-acid biosynthesis; L-arginine biosynthesis; N(2)-acetyl-L-ornithine from L-glutamate: step 1/4. Its function is as follows. Catalyzes two activities which are involved in the cyclic version of arginine biosynthesis: the synthesis of N-acetylglutamate from glutamate and acetyl-CoA as the acetyl donor, and of ornithine by transacetylation between N(2)-acetylornithine and glutamate. This is Arginine biosynthesis bifunctional protein ArgJ from Bacillus anthracis.